The following is a 120-amino-acid chain: Phosphoribosyl-AMP cyclohydrolase (120 aa).

Aspartate 75 contacts Mg(2+). Position 76 (cysteine 76) interacts with Zn(2+). Mg(2+)-binding residues include aspartate 77 and aspartate 79. Zn(2+) is bound by residues cysteine 92 and cysteine 99.

This sequence belongs to the PRA-CH family. As to quaternary structure, homodimer. Requires Mg(2+) as cofactor. Zn(2+) serves as cofactor.

The protein localises to the cytoplasm. The catalysed reaction is 1-(5-phospho-beta-D-ribosyl)-5'-AMP + H2O = 1-(5-phospho-beta-D-ribosyl)-5-[(5-phospho-beta-D-ribosylamino)methylideneamino]imidazole-4-carboxamide. The protein operates within amino-acid biosynthesis; L-histidine biosynthesis; L-histidine from 5-phospho-alpha-D-ribose 1-diphosphate: step 3/9. Catalyzes the hydrolysis of the adenine ring of phosphoribosyl-AMP. This Methanosarcina mazei (strain ATCC BAA-159 / DSM 3647 / Goe1 / Go1 / JCM 11833 / OCM 88) (Methanosarcina frisia) protein is Phosphoribosyl-AMP cyclohydrolase.